The primary structure comprises 285 residues: NAD kinase (285 aa).

Catalysis depends on D64, which acts as the Proton acceptor. Residues 64 to 65 (DG), 138 to 139 (ND), R149, R166, D168, L176, 179 to 184 (SGYTIS), and Q238 each bind NAD(+).

The protein belongs to the NAD kinase family. The cofactor is a divalent metal cation.

The protein resides in the cytoplasm. It carries out the reaction NAD(+) + ATP = ADP + NADP(+) + H(+). Involved in the regulation of the intracellular balance of NAD and NADP, and is a key enzyme in the biosynthesis of NADP. Catalyzes specifically the phosphorylation on 2'-hydroxyl of the adenosine moiety of NAD to yield NADP. This Lawsonia intracellularis (strain PHE/MN1-00) protein is NAD kinase.